We begin with the raw amino-acid sequence, 594 residues long: Golgi-associated RAB2 interactor protein 4 (594 aa).

Positions 390–525 (AAGLPVSTRQ…SSGSSKRLGR (136 aa)) are disordered. A compositionally biased stretch (polar residues) spans 396 to 406 (STRQSKSSLSG). Basic and acidic residues-rich tracts occupy residues 408 to 433 (HGRE…DKAL), 442 to 455 (TGES…DKIA), and 468 to 477 (ASRDGKKEKG). Residues 510–521 (RSSSTTSSGSSK) are compositionally biased toward low complexity.

This sequence belongs to the GARIN family. Interacts (via N-terminus) with RAB2B (in GTP-bound form).

It localises to the golgi apparatus. Functionally, RAB2B effector protein required for the compacted Golgi morphology, probably through interaction with small GTPase RAB2B. This is Golgi-associated RAB2 interactor protein 4 (GARIN4) from Macaca fascicularis (Crab-eating macaque).